Consider the following 293-residue polypeptide: Probable metal transport system membrane protein TC_0698 (293 aa).

Transmembrane regions (helical) follow at residues 18–38, 41–61, 68–88, 101–121, 142–162, 186–206, and 242–262; these read SLLA…YIVV, IVSI…IALW, LPIS…ICIG, IISM…SKLP, DLYF…ICHT, FLLL…MGVI, and FLGI…IAIL.

Belongs to the ABC-3 integral membrane protein family.

It is found in the cell inner membrane. Its function is as follows. Part of an ATP-driven transport system TC_0696/TC_0697/TC_0698 for a metal. This chain is Probable metal transport system membrane protein TC_0698, found in Chlamydia muridarum (strain MoPn / Nigg).